Consider the following 252-residue polypeptide: Trans-aconitate 2-methyltransferase (252 aa).

It belongs to the methyltransferase superfamily. Tam family.

It localises to the cytoplasm. The enzyme catalyses trans-aconitate + S-adenosyl-L-methionine = (E)-3-(methoxycarbonyl)pent-2-enedioate + S-adenosyl-L-homocysteine. Its function is as follows. Catalyzes the S-adenosylmethionine monomethyl esterification of trans-aconitate. The polypeptide is Trans-aconitate 2-methyltransferase (Escherichia coli O9:H4 (strain HS)).